A 262-amino-acid chain; its full sequence is Versicolorin reductase 1 (262 aa).

The NADP(+) site is built by isoleucine 21, aspartate 67, asparagine 94, and arginine 127. Active-site proton donor residues include serine 143 and serine 144. 4 residues coordinate NADP(+): tyrosine 158, lysine 162, isoleucine 191, and threonine 193. The active-site Proton acceptor is tyrosine 158. Lysine 162 (lowers pKa of active site Tyr) is an active-site residue.

The protein belongs to the short-chain dehydrogenases/reductases (SDR) family.

The protein resides in the cytoplasm. The protein localises to the cytosol. The enzyme catalyses (4S,8R)-2,13,16,20-tetrahydroxy-7,9-dioxapentacyclo[10.8.0.0(3,10).0(4,8).0(14,19)]icosa-1(12),2,5,10,13,16,19-heptaen-18-one + NADPH + H(+) = (4S,8R,16R)-2,13,16,20-tetrahydroxy-7,9-dioxapentacyclo[10.8.0.0(3,10).0(4,8).0(14,19)]icosa-1(12),2,5,10,13,19-hexaen-18-one + NADP(+). It participates in mycotoxin biosynthesis; aflatoxin biosynthesis. Its function is as follows. Cytochrome P450 monooxygenase; part of the gene cluster that mediates the biosynthesis of aflatoxins, a group of polyketide-derived furanocoumarins, and part of the most toxic and carcinogenic compounds among the known mycotoxins. The four major aflatoxins produced by A.parasiticus are aflatoxin B1 (AFB1), aflatoxin B2 (AFB2), aflatoxin G1 (AFG1) and aflatoxin G2 (AFG2). Within the aflatoxin pathway, with the cytochrome P450 monooxygenase aflN, the versicolorin reductase aflM, is involved in conversion of VERA to demethylsterigmatocystin (DMST). The biosynthesis of aflatoxins begins with the norsolorinic acid synthase aflC that combines a hexanoyl starter unit produced by the fatty acid synthase aflA/aflB and 7 malonyl-CoA extender units to synthesize the precursor NOR. The second step is the conversion of NOR to averantin and requires the norsolorinic acid ketoreductase aflD, which catalyzes the dehydration of norsolorinic acid to form (1'S)-averantin. The norsolorinic acid reductases aflE and aflF may also play a role in the conversion of NOR to AVN. The cytochrome P450 monooxygenase aflG then catalyzes the hydroxylation of AVN to 5'hydroxyaverantin (HAVN). The next step is performed by the 5'-hydroxyaverantin dehydrogenase aflH that transforms HAVN to 5'-oxoaverantin (OAVN) which is further converted to averufin (AVF) by aflK that plays a dual role in the pathway, as a 5'-oxoaverantin cyclase that mediates conversion of 5'-oxoaverantin, as well as a versicolorin B synthase in a later step in the pathway. The averufin oxidase aflI catalyzes the conversion of AVF to versiconal hemiacetal acetate (VHA). VHA is then the substrate for the versiconal hemiacetal acetate esterase aflJ to yield versiconal (VAL). Versicolorin B synthase aflK then converts VAL to versicolorin B (VERB) by closing the bisfuran ring of aflatoxin which is required for DNA-binding, thus giving to aflatoxin its activity as a mutagen. Then, the activity of the versicolorin B desaturase aflL leads to versicolorin A (VERA). A branch point starts from VERB since it can also be converted to dihydrodemethylsterigmatocystin (DMDHST), probably also by aflL, VERA being a precursor for aflatoxins B1 and G1, and DMDHST for aflatoxins B2 and G2. Next, the versicolorin reductase aflM and the cytochrome P450 monooxygenase aflN are involved in conversion of VERA to demethylsterigmatocystin (DMST). AflX and aflY seem also involved in this step, through probable aflX-mediated epoxide ring-opening step following versicolorin A oxidation and aflY-mediated Baeyer-Villiger oxidation required for the formation of the xanthone ring. The methyltransferase aflO then leads to the modification of DMST to sterigmatocystin (ST), and of DMDHST to dihydrosterigmatocystin (DHST). Both ST and DHST are then substrates of the O-methyltransferase aflP to yield O-methylsterigmatocystin (OMST) and dihydro-O-methylsterigmatocystin (DHOMST), respectively. Finally OMST is converted to aflatoxins B1 and G1, and DHOMST to aflatoxins B2 and G2, via the action of several enzymes including O-methylsterigmatocystin oxidoreductase aflQ, the cytochrome P450 monooxygenase aflU, but also the NADH-dependent flavin oxidoreductase nadA which is specifically required for the synthesis of AFG1. The protein is Versicolorin reductase 1 of Aspergillus parasiticus (strain ATCC 56775 / NRRL 5862 / SRRC 143 / SU-1).